Consider the following 171-residue polypeptide: Odorant-binding protein 1b (171 aa).

An N-terminal signal peptide occupies residues Met-1 to Ala-19. 2 cysteine pairs are disulfide-bonded: Cys-57–Cys-61 and Cys-76–Cys-169.

It belongs to the calycin superfamily. Lipocalin family. May form a heterodimer with OBP1A. In terms of processing, the N-terminus may be blocked. In terms of tissue distribution, expressed in nasal mucosa (at protein level). Specifically detected in septal and lateral nasal glands.

It localises to the secreted. Functionally, binds the chemical odorant 2-isobutyl-3-methoxypyrazine. The protein is Odorant-binding protein 1b of Mus musculus (Mouse).